Consider the following 460-residue polypeptide: Ribosomal protein uS12 methylthiotransferase RimO (460 aa).

Residues 18-134 form the MTTase N-terminal domain; it reads MKIHITSLGC…VTSIVAEVLR (117 aa). Residues C27, C63, C97, C171, C175, and C178 each coordinate [4Fe-4S] cluster. The 231-residue stretch at 157–387 folds into the Radical SAM core domain; the sequence is STPFHYAYVK…MVLQQEISLS (231 aa). The TRAM domain occupies 390-456; the sequence is QEWIGKTLEV…HYDLMGEAID (67 aa).

The protein belongs to the methylthiotransferase family. RimO subfamily. It depends on [4Fe-4S] cluster as a cofactor.

It is found in the cytoplasm. It carries out the reaction L-aspartate(89)-[ribosomal protein uS12]-hydrogen + (sulfur carrier)-SH + AH2 + 2 S-adenosyl-L-methionine = 3-methylsulfanyl-L-aspartate(89)-[ribosomal protein uS12]-hydrogen + (sulfur carrier)-H + 5'-deoxyadenosine + L-methionine + A + S-adenosyl-L-homocysteine + 2 H(+). Catalyzes the methylthiolation of an aspartic acid residue of ribosomal protein uS12. The sequence is that of Ribosomal protein uS12 methylthiotransferase RimO from Heliobacterium modesticaldum (strain ATCC 51547 / Ice1).